The primary structure comprises 142 residues: Large ribosomal subunit protein uL13 (142 aa).

This sequence belongs to the universal ribosomal protein uL13 family. As to quaternary structure, part of the 50S ribosomal subunit.

This protein is one of the early assembly proteins of the 50S ribosomal subunit, although it is not seen to bind rRNA by itself. It is important during the early stages of 50S assembly. The chain is Large ribosomal subunit protein uL13 from Xanthomonas campestris pv. campestris (strain ATCC 33913 / DSM 3586 / NCPPB 528 / LMG 568 / P 25).